We begin with the raw amino-acid sequence, 298 residues long: Putative GATA zinc finger domain-containing protein 25 (298 aa).

Residues 4-37 (DNKNKNDNYQESIQRIVNQRNNLLKEIENKINQQ) adopt a coiled-coil conformation. The disordered stretch occupies residues 148–227 (QQQLQQSHTK…RGRPSKPKPE (80 aa)). The segment covering 183–202 (EENEENEENEENEENEENEE) has biased composition (acidic residues). Over residues 203 to 212 (NKEKDVEVAK) the composition is skewed to basic and acidic residues. Basic residues predominate over residues 214–223 (NKPKRGRPSK). The segment at 229 to 256 (CFRYGTRSCPYWRKNVIKGELVDVCNAC) adopts a GATA-type; degenerate zinc-finger fold.

This chain is Putative GATA zinc finger domain-containing protein 25 (gtaY), found in Dictyostelium discoideum (Social amoeba).